The following is a 917-amino-acid chain: Smoothelin (917 aa).

Ala2 bears the N-acetylalanine mark. The stretch at 24–89 (LAERRRIRSA…ARLAGQLESM (66 aa)) forms a coiled coil. A disordered region spans residues 157–456 (EVPEREEQEQ…AVGTAEPGGS (300 aa)). Residues 177 to 188 (PEGTSQDVTTVT) show a composition bias toward polar residues. Composition is skewed to low complexity over residues 193 to 210 (APPG…SSPT) and 220 to 232 (PAEA…EVPG). Over residues 233 to 243 (SPEPPPSPPKT) the composition is skewed to pro residues. Over residues 244–258 (TSPEPQESPTLPSTE) the composition is skewed to low complexity. A compositionally biased stretch (polar residues) spans 298–326 (RSLSVLSPRQPAQNRESTPLASGPSSFQR). Phosphoserine occurs at positions 299, 301, and 304. A compositionally biased stretch (basic and acidic residues) spans 329 to 338 (SVRDRVHKFT). Ser341 carries the phosphoserine modification. Thr351 bears the Phosphothreonine mark. Residue Ser357 is modified to Phosphoserine. Phosphothreonine is present on residues Thr360 and Thr373. Residues 363–392 (RLLGPSLTSTTPASSSSGSSSRGPSDTSSR) are compositionally biased toward low complexity. Phosphoserine occurs at positions 503, 514, 523, and 576. Disordered stretches follow at residues 560 to 580 (ANGA…PLSA) and 617 to 767 (QRKR…RKAM). A coiled-coil region spans residues 603 to 630 (EERKLIRAALRELRQRKRDQRDKERERR). Positions 617-640 (QRKRDQRDKERERRLQEARGRPGE) are enriched in basic and acidic residues. Over residues 676–689 (NDGTRTARTTTVES) the composition is skewed to polar residues. Residues 701–720 (STMMQTKTFSSSSSSKKMGS) are compositionally biased toward low complexity. Phosphoserine is present on Ser729. Residues 738 to 750 (LEKRQAEKKKELM) are compositionally biased toward basic and acidic residues. Ser792 is subject to Phosphoserine. In terms of domain architecture, Calponin-homology (CH) spans 799–906 (NSIKQMLLDW…YVQSLYNHLR (108 aa)).

The protein belongs to the smoothelin family. Smooth muscle; contractile or vascular (for the long form).

The protein resides in the cytoplasm. It is found in the cytoskeleton. In terms of biological role, structural protein of the cytoskeleton. The chain is Smoothelin (SMTN) from Homo sapiens (Human).